The chain runs to 202 residues: Outer-membrane lipoprotein carrier protein (202 aa).

The signal sequence occupies residues 1 to 18 (MNRLFLILLLIFSHEVFS).

This sequence belongs to the LolA family. As to quaternary structure, monomer.

Its subcellular location is the periplasm. In terms of biological role, participates in the translocation of lipoproteins from the inner membrane to the outer membrane. Only forms a complex with a lipoprotein if the residue after the N-terminal Cys is not an aspartate (The Asp acts as a targeting signal to indicate that the lipoprotein should stay in the inner membrane). The sequence is that of Outer-membrane lipoprotein carrier protein from Legionella pneumophila (strain Lens).